A 368-amino-acid chain; its full sequence is Anti-sigma-X factor RsiX (368 aa).

Polar residues predominate over residues glutamine 73–lysine 87. The segment at glutamine 73–aspartate 101 is disordered.

Its subcellular location is the cell membrane. The anti-sigma factor for extracytoplasmic function (ECF) sigma factor SigX, inhibits SigX activity and stabilizes it. This Bacillus subtilis (strain 168) protein is Anti-sigma-X factor RsiX (rsiX).